Consider the following 335-residue polypeptide: tRNA N6-adenosine threonylcarbamoyltransferase (335 aa).

His110 and His114 together coordinate Fe cation. Substrate-binding positions include 132–136 (LVSGG), Asp165, Gly178, and Asn271. Asp299 lines the Fe cation pocket.

The protein belongs to the KAE1 / TsaD family. Fe(2+) is required as a cofactor.

Its subcellular location is the cytoplasm. It carries out the reaction L-threonylcarbamoyladenylate + adenosine(37) in tRNA = N(6)-L-threonylcarbamoyladenosine(37) in tRNA + AMP + H(+). Its function is as follows. Required for the formation of a threonylcarbamoyl group on adenosine at position 37 (t(6)A37) in tRNAs that read codons beginning with adenine. Is involved in the transfer of the threonylcarbamoyl moiety of threonylcarbamoyl-AMP (TC-AMP) to the N6 group of A37, together with TsaE and TsaB. TsaD likely plays a direct catalytic role in this reaction. The polypeptide is tRNA N6-adenosine threonylcarbamoyltransferase (Campylobacter jejuni subsp. jejuni serotype O:6 (strain 81116 / NCTC 11828)).